The following is a 335-amino-acid chain: SLAM family member 7 (335 aa).

An N-terminal signal peptide occupies residues 1–22 (MAGSPTCLTLIYILWQLTGSAA). The 102-residue stretch at 23–124 (SGPVKELVGS…PSTQEYVLHV (102 aa)) folds into the Ig-like V-type domain. Residues 23-226 (SGPVKELVGS…GAADDPDSSM (204 aa)) are Extracellular-facing. N-linked (GlcNAc...) asparagine glycosylation is found at Asn98, Asn142, Asn148, Asn172, Asn176, and Asn204. The 76-residue stretch at 131-206 (PKVTMGLQSN…ARNPVSRNFS (76 aa)) folds into the Ig-like C2-type domain. Disulfide bonds link Cys145–Cys215 and Cys151–Cys195. Residues 227–247 (VLLCLLLVPLLLSLFVLGLFL) form a helical membrane-spanning segment. The Cytoplasmic segment spans residues 248–335 (WFLKRERQEE…PRLFAYENVI (88 aa)). The tract at residues 278-296 (SGENTEYDTIPHTNRTILK) is interaction with FYN when phosphorylated at Tyr-284. Positions 302–307 (TVYSTV) match the ITSM motif.

Isoform 1 binds to SH2D1A when its cytoplasmic tail is phosphorylated in the presence of FYN (in vitro); low affinity binding, the physiological relevance of the interaction is questioned. Interacts with SH2D1B; in NK cells. Interacts (via ITSM phosphorylated on Tyr-302) with SH2D1B, PTPN6/SHP-1, PTPN11/SHP-2, INPP5D/SHIP1, CSK and FYN. In terms of tissue distribution, expressed in spleen, lymph node, peripheral blood leukocytes, bone marrow, small intestine, stomach, appendix, lung and trachea. Expression was detected in NK cells, activated B-cells, NK-cell line but not in promyelocytic, B-, or T-cell lines. Expressed in monocytes. Isoform 3 is expressed at much lower level than isoform 1.

It localises to the membrane. Its function is as follows. Self-ligand receptor of the signaling lymphocytic activation molecule (SLAM) family. SLAM receptors triggered by homo- or heterotypic cell-cell interactions are modulating the activation and differentiation of a wide variety of immune cells and thus are involved in the regulation and interconnection of both innate and adaptive immune response. Activities are controlled by presence or absence of small cytoplasmic adapter proteins, SH2D1A/SAP and/or SH2D1B/EAT-2. Isoform 1 mediates NK cell activation through a SH2D1A-independent extracellular signal-regulated ERK-mediated pathway. Positively regulates NK cell functions by a mechanism dependent on phosphorylated SH2D1B. Downstream signaling implicates PLCG1, PLCG2 and PI3K. In addition to heterotypic NK cells-target cells interactions also homotypic interactions between NK cells may contribute to activation. However, in the absence of SH2D1B, inhibits NK cell function. Also acts inhibitory in T-cells. May play a role in lymphocyte adhesion. In LPS-activated monocytes negatively regulates production of pro-inflammatory cytokines. Isoform 3 does not mediate any NK cell activation. In Homo sapiens (Human), this protein is SLAM family member 7 (SLAMF7).